A 1860-amino-acid chain; its full sequence is Proprotein convertase subtilisin/kexin type 5 (1860 aa).

An N-terminal signal peptide occupies residues 1–32 (MGWGSRCCCPGRLDLLCVLALLGGCLLPVCRT). Positions 33 to 114 (RVYTNHWAVK…QQVVKKRTKR (82 aa)) are excised as a propeptide. Residues 115 to 1743 (DYDFSRAQST…VRPATEHFKT (1629 aa)) are Extracellular-facing. A Peptidase S8 domain is found at 134–453 (MWYMHCSDNT…FGLMDAEAMV (320 aa)). Active-site charge relay system residues include Asp171 and His212. N-linked (GlcNAc...) asparagine glycosylation is found at Asn225 and Asn381. Residue Ser386 is the Charge relay system of the active site. Residues 461-601 (TVPRQHVCVE…SLVLYGTSVQ (141 aa)) enclose the P/Homo B domain. Residues 519 to 521 (RGD) carry the Cell attachment site motif. FU repeat units follow at residues 630-680 (EDYA…GHYH), 683-730 (KKRC…GSYQ), 734-777 (KNLC…GRYF), 779-824 (GQDC…SYYF), 832-879 (YKSC…GEYV), 882-927 (HGHC…WKFE), 929-979 (ENQC…GHYA), 982-1028 (GNTC…GEVQ), 1032-1077 (YEEC…KTYS), 1079-1121 (EVEC…GFYG), 1125-1168 (MGEC…KTQE), 1177-1221 (LRKL…GTWP), 1225-1272 (SGSC…GSYA), 1274-1318 (DGIC…RHVA), 1320-1363 (KGVC…GFYA), 1365-1411 (SRHC…GTYY), 1415-1461 (TKEC…SEYW), 1465-1510 (APGC…GYYA), 1514-1559 (SNRC…GYYA), 1563-1610 (TGRC…HYYV), 1614-1659 (TQTC…GEYR), and 1665-1712 (KFNC…SDPP). Positions 636-1727 (CDPECSEVGC…CDCQDTTDEC (1092 aa)) are CRM (Cys-rich motif). The N-linked (GlcNAc...) asparagine glycan is linked to Asn665. Asn752, Asn802, and Asn852 each carry an N-linked (GlcNAc...) asparagine glycan. The 45-residue stretch at 869–913 (MGAICKDGEYVDEHGHCQTCEASCAKCQGPTQEDCTTCPMTRIFD) folds into the PLAC domain. N-linked (GlcNAc...) asparagine glycosylation occurs at Asn1014. Asn1191 carries an N-linked (GlcNAc...) asparagine glycan. Asn1290 is a glycosylation site (N-linked (GlcNAc...) asparagine). The N-linked (GlcNAc...) asparagine glycan is linked to Asn1497. 2 N-linked (GlcNAc...) asparagine glycosylation sites follow: Asn1685 and Asn1707. Residues 1744 to 1764 (ALFITSSMMLVLLLGAAVVVW) form a helical membrane-spanning segment. The Cytoplasmic segment spans residues 1765–1860 (KKSRGRVQPA…YDDESYSYYQ (96 aa)). AC regions lie at residues 1807–1826 (VIEY…IVYM) and 1838–1860 (YGLL…SYYQ).

Belongs to the peptidase S8 family. In terms of tissue distribution, expressed in T-lymphocytes.

The protein localises to the secreted. Its subcellular location is the endomembrane system. Functionally, serine endoprotease that processes various proproteins by cleavage at paired basic amino acids, recognizing the RXXX[KR]R consensus motif. Likely functions in the constitutive and regulated secretory pathways. Plays an essential role in pregnancy establishment by proteolytic activation of a number of important factors such as BMP2, CALD1 and alpha-integrins. This Homo sapiens (Human) protein is Proprotein convertase subtilisin/kexin type 5 (PCSK5).